The chain runs to 124 residues: Small ribosomal subunit protein uS12 (124 aa).

A 3-methylthioaspartic acid modification is found at Asp89.

This sequence belongs to the universal ribosomal protein uS12 family. Part of the 30S ribosomal subunit. Contacts proteins S8 and S17. May interact with IF1 in the 30S initiation complex.

With S4 and S5 plays an important role in translational accuracy. Its function is as follows. Interacts with and stabilizes bases of the 16S rRNA that are involved in tRNA selection in the A site and with the mRNA backbone. Located at the interface of the 30S and 50S subunits, it traverses the body of the 30S subunit contacting proteins on the other side and probably holding the rRNA structure together. The combined cluster of proteins S8, S12 and S17 appears to hold together the shoulder and platform of the 30S subunit. In Klebsiella pneumoniae (strain 342), this protein is Small ribosomal subunit protein uS12.